A 938-amino-acid chain; its full sequence is Isoleucine--tRNA ligase (938 aa).

Positions 58 to 68 (PYANGSIHIGH) match the 'HIGH' region motif. Lysine 183 carries the N6-acetyllysine modification. Position 561 (glutamate 561) interacts with L-isoleucyl-5'-AMP. A 'KMSKS' region motif is present at residues 602–606 (KMSKS). Lysine 605 contacts ATP. Residues cysteine 901, cysteine 904, cysteine 921, and cysteine 924 each coordinate Zn(2+).

This sequence belongs to the class-I aminoacyl-tRNA synthetase family. IleS type 1 subfamily. As to quaternary structure, monomer. Zn(2+) serves as cofactor.

The protein resides in the cytoplasm. It carries out the reaction tRNA(Ile) + L-isoleucine + ATP = L-isoleucyl-tRNA(Ile) + AMP + diphosphate. Its function is as follows. Catalyzes the attachment of isoleucine to tRNA(Ile). As IleRS can inadvertently accommodate and process structurally similar amino acids such as valine, to avoid such errors it has two additional distinct tRNA(Ile)-dependent editing activities. One activity is designated as 'pretransfer' editing and involves the hydrolysis of activated Val-AMP. The other activity is designated 'posttransfer' editing and involves deacylation of mischarged Val-tRNA(Ile). This chain is Isoleucine--tRNA ligase, found in Shigella flexneri.